The primary structure comprises 938 residues: MEQLKTIGRELAMGSQGGFGQSKEFLDLVKSIGEARSKAEEDRIVLSEVDILKRRLLEPDIPKRKMKEYIIRLVYIEMLGHDASFGYIYAVKMTHDDNLLLKRTGYLAVTLFLNEDHDLIILIVNTIQKDLRSDNYLVVCAALNAICRLINEETIPAVLPQVVELLNHQKEAVRKKAIMALHRFHRKSPSSVSHLVSNFRKRLCDNDPGVMGATLCPLFDLISEDVNSYKDLVSSFVSILKQVTERRLPKSYDYHQMPAPFIQIKLLKIMALLGSGDKNASDIMSMVLGDLFRKCDSSTNIGNAILYECIRCISCILPNPKLLEAAADAISKFLKSDSHNLKYMGIDGLGRLIKISPDIAEQHQLAVIDCLEDPDDTLKRKTFELLYKMTKSSNVEVIVDRMIDYMISINDNHYKTEIASRCVELAEQFAPSNQWFIQIMNKVFEHAGDLVNIKVAHNLMRLIAEGFGEDDDDADSKLRLSAVESYLQLISEPKLPSLFLQVISWVLGEYGTADGKYSASYISGKLCDVADAYSSDETVKGYAVSALMKIYAFEIASGRKVDVLPECQSLIEELLASHSTDLQQRAYELQALLALDARAVETILPLDASCEDIEVDKDLSFLNGYIQQAIESGAQPYISERERSGMFETTDYHPQDHHEVPTHALRFEAYELPKPSVPPQASNELVPVPEPSYYSESHQPISTSLVSERESSEIKLRLDGVKQKWGRPSYQSTTAASSTTPQAANGISTHSDAGVGSSSSKPRSSYEPKKPEIDPEKQRLAASLFGGSSSRTDKRSSSGGHKPAKGTANKTATVPKENQTPVQPPPDLLDFGEPTATTATAMDPFKELEGLMDSSSQDGGSSDVMGLYSDAAPVTTTTSVDSLLSELSDSSKGNSRTYQPQTSKGPNTKEALEKDALVRQMGVNPTSQNPTLFKDLLG.

HEAT repeat units lie at residues 118–153 (DLIILIVNTIQKDLRSDNYLVVCAALNAICRLINEE), 154–190 (TIPAVLPQVVELLNHQKEAVRKKAIMALHRFHRKSPS), 192–227 (VSHLVSNFRKRLCDNDPGVMGATLCPLFDLISEDVN), 234–272 (SSFVSILKQVTERRLPKSYDYHQMPAPFIQIKLLKIMAL), 321–358 (KLLEAAADAISKFLKSDSHNLKYMGIDGLGRLIKISPD), 359–395 (IAEQHQLAVIDCLEDPDDTLKRKTFELLYKMTKSSNV), 397–431 (VIVDRMIDYMISINDNHYKTEIASRCVELAEQFAP), 454–495 (KVAH…EPKL), 517–556 (YSASYISGKLCDVADAYSSDETVKGYAVSALMKIYAFEIA), and 562–601 (DVLPECQSLIEELLASHSTDLQQRAYELQALLALDARAVE). Disordered regions lie at residues 690–712 (EPSYYSESHQPISTSLVSERESS), 725–867 (WGRP…VMGL), 880–912 (VDSLLSELSDSSKGNSRTYQPQTSKGPNTKEAL), and 919–938 (RQMGVNPTSQNPTLFKDLLG). The segment covering 694 to 706 (YSESHQPISTSLV) has biased composition (polar residues). Over residues 728-744 (PSYQSTTAASSTTPQAA) the composition is skewed to low complexity. Over residues 764–779 (SSYEPKKPEIDPEKQR) the composition is skewed to basic and acidic residues. Positions 808–821 (ANKTATVPKENQTP) are enriched in polar residues. Low complexity-rich tracts occupy residues 853–863 (DSSSQDGGSSD) and 880–891 (VDSLLSELSDSS). The HEAT 11 repeat unit spans residues 874-911 (VTTTTSVDSLLSELSDSSKGNSRTYQPQTSKGPNTKEA). Positions 892–906 (KGNSRTYQPQTSKGP) are enriched in polar residues.

It belongs to the adaptor complexes large subunit family. Adaptor protein complex 4 (AP-4) is a heterotetramer composed of two large adaptins (epsilon-type subunit and beta-type subunit), a medium adaptin (mu-type subunit) and a small adaptin (sigma-type subunit).

The protein localises to the golgi apparatus. Its subcellular location is the trans-Golgi network. It is found in the membrane. The protein resides in the coated pit. Functionally, subunit of novel type of clathrin- or non-clathrin-associated protein coat involved in targeting proteins from the trans-Golgi network (TGN) to the endosomal-lysosomal system. In Arabidopsis thaliana (Mouse-ear cress), this protein is AP-4 complex subunit epsilon.